The chain runs to 286 residues: Deaminated glutathione amidase (286 aa).

The CN hydrolase domain occupies 4 to 252 (ANVALLQLCS…VSALKVKIET (249 aa)). Catalysis depends on Glu42, which acts as the Proton acceptor. Residue Lys115 is part of the active site. Cys157 serves as the catalytic Nucleophile.

The protein belongs to the carbon-nitrogen hydrolase superfamily. NIT1/NIT2 family.

The enzyme catalyses N-(4-oxoglutaryl)-L-cysteinylglycine + H2O = L-cysteinylglycine + 2-oxoglutarate. Hydrolyzes deaminated glutathione (dGSH, 2-oxoglutaramate) to alpha-ketoglutarate (alpha-KG) and cysteinylglycine (specific activity 6.50 umol/min/mg), has less activity against alpha-ketoglutaramate (a-KGM, specific activity 0.20 umol/min/mg), very little activity on glutathione and none on L-glutamine. May function as a metabolite repair enzyme. This chain is Deaminated glutathione amidase, found in Yersinia enterocolitica.